A 133-amino-acid chain; its full sequence is Glutaredoxin-C4, chloroplastic (133 aa).

The span at Met-1 to Pro-13 shows a compositional bias: low complexity. The interval Met-1–Pro-25 is disordered. Residues Met-1 to Met-27 constitute a chloroplast transit peptide. Positions Leu-29–Ala-129 constitute a Glutaredoxin domain. Cysteines 49 and 52 form a disulfide.

The protein belongs to the glutaredoxin family. CPYC subfamily.

Its subcellular location is the plastid. The protein resides in the chloroplast. Has a glutathione-disulfide oxidoreductase activity in the presence of NADPH and glutathione reductase. Reduces low molecular weight disulfides and proteins. The polypeptide is Glutaredoxin-C4, chloroplastic (GRXC4) (Oryza sativa subsp. japonica (Rice)).